The chain runs to 245 residues: AA9 family lytic polysaccharide monooxygenase B (245 aa).

The signal sequence occupies residues 1 to 18 (MKSAIFAAAVLGAAGVSA). 2 residues coordinate Cu(2+): histidine 19 and histidine 105. Cysteine 116 and cysteine 120 are oxidised to a cystine. 2 residues coordinate O2: histidine 179 and glutamine 188. Position 190 (tyrosine 190) interacts with Cu(2+).

This sequence belongs to the polysaccharide monooxygenase AA9 family. It depends on Cu(2+) as a cofactor.

Its subcellular location is the secreted. It carries out the reaction [(1-&gt;4)-beta-D-glucosyl]n+m + reduced acceptor + O2 = 4-dehydro-beta-D-glucosyl-[(1-&gt;4)-beta-D-glucosyl]n-1 + [(1-&gt;4)-beta-D-glucosyl]m + acceptor + H2O.. Its function is as follows. Lytic polysaccharide monooxygenase (LPMO) that depolymerizes crystalline and amorphous polysaccharides via the oxidation of scissile alpha- or beta-(1-4)-glycosidic bonds, yielding C1 or C4 oxidation products. Catalysis by LPMOs requires the reduction of the active-site copper from Cu(II) to Cu(I) by a reducing agent and H(2)O(2) or O(2) as a cosubstrate. Active on hemicelluloses, including xylan, glucomannan, and xyloglucan. Has no activity on ivory nut mannan (INM), a linear beta-1,4-linked mannan without substitutions. This chain is AA9 family lytic polysaccharide monooxygenase B, found in Malbranchea cinnamomea (Thermophilic fungus).